The chain runs to 191 residues: Putative manganese efflux pump MntP (191 aa).

6 consecutive transmembrane segments (helical) span residues 3–23, 37–57, 65–85, 107–129, 144–164, and 169–189; these read PISILLIGFAMSTDAFAAAIG, LRAGIIFGVIEAITPIIGWLL, VEAFDHWIAFGLLGALGIHMI, WKLALTGFATSIDAMAVGIGLAF, CTLTMVTAGIMFGRVLGSMVG, and IIGGVILVIIGATILYEHLHG.

The protein belongs to the MntP (TC 9.B.29) family.

It is found in the cell inner membrane. Functionally, probably functions as a manganese efflux pump. The protein is Putative manganese efflux pump MntP of Stenotrophomonas maltophilia (strain K279a).